The primary structure comprises 223 residues: Cytidylate kinase (223 aa).

12–20 (GPSGVGKGT) provides a ligand contact to ATP.

Belongs to the cytidylate kinase family. Type 1 subfamily.

It localises to the cytoplasm. The catalysed reaction is CMP + ATP = CDP + ADP. The enzyme catalyses dCMP + ATP = dCDP + ADP. The sequence is that of Cytidylate kinase from Xylella fastidiosa (strain M12).